Consider the following 96-residue polypeptide: uncharacterized protein (96 aa).

Residues 38-91 form the HTH cro/C1-type domain; the sequence is IEQLRKGTGLKIDDFARVLGVSVAMVKEWESRRVKPSSAELKLMRLIQANPALS. Positions 49 to 68 form a DNA-binding region, H-T-H motif; sequence IDDFARVLGVSVAMVKEWES.

This is an uncharacterized protein from Escherichia coli O157:H7.